A 201-amino-acid chain; its full sequence is Peptidyl-tRNA hydrolase (201 aa).

Tyrosine 15 serves as a coordination point for tRNA. Histidine 20 (proton acceptor) is an active-site residue. Residues tyrosine 66, asparagine 68, and asparagine 114 each coordinate tRNA.

It belongs to the PTH family. As to quaternary structure, monomer.

The protein localises to the cytoplasm. The catalysed reaction is an N-acyl-L-alpha-aminoacyl-tRNA + H2O = an N-acyl-L-amino acid + a tRNA + H(+). Hydrolyzes ribosome-free peptidyl-tRNAs (with 1 or more amino acids incorporated), which drop off the ribosome during protein synthesis, or as a result of ribosome stalling. Functionally, catalyzes the release of premature peptidyl moieties from peptidyl-tRNA molecules trapped in stalled 50S ribosomal subunits, and thus maintains levels of free tRNAs and 50S ribosomes. This chain is Peptidyl-tRNA hydrolase, found in Burkholderia mallei (strain NCTC 10247).